A 336-amino-acid chain; its full sequence is Small ribosomal subunit protein uS2 (336 aa).

This sequence belongs to the universal ribosomal protein uS2 family.

The protein is Small ribosomal subunit protein uS2 of Beijerinckia indica subsp. indica (strain ATCC 9039 / DSM 1715 / NCIMB 8712).